Consider the following 141-residue polypeptide: Nucleoside diphosphate kinase (141 aa).

ATP contacts are provided by lysine 10, phenylalanine 58, arginine 86, threonine 92, arginine 103, and asparagine 113. The active-site Pros-phosphohistidine intermediate is the histidine 116.

Belongs to the NDK family. Homotetramer. The cofactor is Mg(2+).

The protein resides in the cytoplasm. The enzyme catalyses a 2'-deoxyribonucleoside 5'-diphosphate + ATP = a 2'-deoxyribonucleoside 5'-triphosphate + ADP. It carries out the reaction a ribonucleoside 5'-diphosphate + ATP = a ribonucleoside 5'-triphosphate + ADP. Functionally, major role in the synthesis of nucleoside triphosphates other than ATP. The ATP gamma phosphate is transferred to the NDP beta phosphate via a ping-pong mechanism, using a phosphorylated active-site intermediate. The chain is Nucleoside diphosphate kinase from Ehrlichia canis (strain Jake).